A 156-amino-acid chain; its full sequence is Small ribosomal subunit protein uS7 (156 aa).

This sequence belongs to the universal ribosomal protein uS7 family. In terms of assembly, part of the 30S ribosomal subunit. Contacts proteins S9 and S11.

Functionally, one of the primary rRNA binding proteins, it binds directly to 16S rRNA where it nucleates assembly of the head domain of the 30S subunit. Is located at the subunit interface close to the decoding center, probably blocks exit of the E-site tRNA. The polypeptide is Small ribosomal subunit protein uS7 (Rhodobacter capsulatus (Rhodopseudomonas capsulata)).